A 455-amino-acid polypeptide reads, in one-letter code: GTPase Der (455 aa).

EngA-type G domains lie at Pro-4 to Asp-169 and Ile-178 to Arg-353. GTP is bound by residues Gly-10–Ser-17, Asp-57–Leu-61, Asn-120–Glu-123, Gly-184–Ser-191, Asp-231–Ile-235, and Asn-296–Asp-299. In terms of domain architecture, KH-like spans Arg-354–Gln-439.

Belongs to the TRAFAC class TrmE-Era-EngA-EngB-Septin-like GTPase superfamily. EngA (Der) GTPase family. Associates with the 50S ribosomal subunit.

In terms of biological role, GTPase that plays an essential role in the late steps of ribosome biogenesis. In Parasynechococcus marenigrum (strain WH8102), this protein is GTPase Der.